The chain runs to 264 residues: Thymidylate synthase (264 aa).

Residue Arg21 coordinates dUMP. A (6R)-5,10-methylene-5,6,7,8-tetrahydrofolate-binding site is contributed by His51. Residue 126-127 (RR) participates in dUMP binding. Cys146 functions as the Nucleophile in the catalytic mechanism. DUMP is bound by residues 166-169 (RSCD), Asn177, and 207-209 (HLY). Asp169 serves as a coordination point for (6R)-5,10-methylene-5,6,7,8-tetrahydrofolate. Ala263 provides a ligand contact to (6R)-5,10-methylene-5,6,7,8-tetrahydrofolate.

Belongs to the thymidylate synthase family. Bacterial-type ThyA subfamily. Homodimer.

It localises to the cytoplasm. The enzyme catalyses dUMP + (6R)-5,10-methylene-5,6,7,8-tetrahydrofolate = 7,8-dihydrofolate + dTMP. Its pathway is pyrimidine metabolism; dTTP biosynthesis. Catalyzes the reductive methylation of 2'-deoxyuridine-5'-monophosphate (dUMP) to 2'-deoxythymidine-5'-monophosphate (dTMP) while utilizing 5,10-methylenetetrahydrofolate (mTHF) as the methyl donor and reductant in the reaction, yielding dihydrofolate (DHF) as a by-product. This enzymatic reaction provides an intracellular de novo source of dTMP, an essential precursor for DNA biosynthesis. This Cronobacter sakazakii (strain ATCC BAA-894) (Enterobacter sakazakii) protein is Thymidylate synthase.